We begin with the raw amino-acid sequence, 627 residues long: Hemocyanin B chain (627 aa).

3 residues coordinate Cu cation: H173, H177, and H204. N312 and N316 each carry an N-linked (GlcNAc...) asparagine glycan. Cu cation contacts are provided by H324, H328, and H364. C534 and C582 form a disulfide bridge.

This sequence belongs to the tyrosinase family. Hemocyanin subfamily. Tarantula hemocyanin is a 24-chain polymer with seven different chains identified. Hemolymph.

It is found in the secreted. It localises to the extracellular space. Its function is as follows. Hemocyanins are copper-containing oxygen carriers occurring freely dissolved in the hemolymph of many mollusks and arthropods. The chain is Hemocyanin B chain (HCB) from Aphonopelma sp. (American tarantula).